The primary structure comprises 248 residues: PF03932 family protein CutC (248 aa).

This sequence belongs to the CutC family. In terms of assembly, homodimer.

The protein localises to the cytoplasm. This chain is PF03932 family protein CutC, found in Escherichia coli O81 (strain ED1a).